A 324-amino-acid polypeptide reads, in one-letter code: Transmembrane protein 171 (324 aa).

4 helical membrane passes run 22–42, 57–77, 113–133, and 160–180; these read IFCF…LSIF, MVLK…VILA, LIFG…GIWV, and FLSL…FFVV. The span at 229 to 239 shows a compositional bias: low complexity; the sequence is PESSASAVAES. 2 disordered regions span residues 229-248 and 279-304; these read PESS…LLPN and YTIS…PPRY. Over residues 279 to 291 the composition is skewed to polar residues; that stretch reads YTISGTNSSSEAS.

Its subcellular location is the membrane. This Homo sapiens (Human) protein is Transmembrane protein 171 (TMEM171).